The primary structure comprises 623 residues: Lethal(3)malignant brain tumor-like protein 4 (623 aa).

The disordered stretch occupies residues 1-44 (MKQPNRKRKLNMDSKERLDQDGRLEQAEEEKKPKDSTTPLSHVP). Positions 10–35 (LNMDSKERLDQDGRLEQAEEEKKPKD) are enriched in basic and acidic residues. 3 MBT repeats span residues 52 to 152 (WSWE…LHIP), 160 to 260 (FVWM…LIAP), and 269 to 364 (FSWT…LEVP). The CCHHC-type zinc-finger motif lies at 370 to 414 (LKILPGQAVCPTPGCRGIGHIRGPRYSGHHSAFGCPYSDMNLKKE). Residues Cys-379, Cys-384, His-398, and Cys-404 each contribute to the Zn(2+) site. The SAM domain occupies 543–607 (WTVDEVAEFV…YNSILMFRHS (65 aa)).

It localises to the nucleus. Putative Polycomb group (PcG) protein. PcG proteins maintain the transcriptionally repressive state of genes, probably via a modification of chromatin, rendering it heritably changed in its expressibility. This Homo sapiens (Human) protein is Lethal(3)malignant brain tumor-like protein 4 (L3MBTL4).